Reading from the N-terminus, the 168-residue chain is Phosphopantetheine adenylyltransferase (168 aa).

Residue T13 participates in substrate binding. ATP is bound by residues T13–F14 and H21. 3 residues coordinate substrate: K45, L78, and R92. Residues G93–R95, E103, and T128–S134 contribute to the ATP site.

Belongs to the bacterial CoaD family. In terms of assembly, homohexamer. Mg(2+) is required as a cofactor.

The protein localises to the cytoplasm. The enzyme catalyses (R)-4'-phosphopantetheine + ATP + H(+) = 3'-dephospho-CoA + diphosphate. It functions in the pathway cofactor biosynthesis; coenzyme A biosynthesis; CoA from (R)-pantothenate: step 4/5. Functionally, reversibly transfers an adenylyl group from ATP to 4'-phosphopantetheine, yielding dephospho-CoA (dPCoA) and pyrophosphate. The protein is Phosphopantetheine adenylyltransferase of Wolbachia pipientis wMel.